We begin with the raw amino-acid sequence, 324 residues long: MHFLVALVLLGQIIGSTLSSQVRGDLECDDREAKEWADQAVRYINEHKLHEYKQALNVIKNIVVVPWNGDLVAVFLKLNLLETECHVLDPTPVEKCTIRPQQNHAVEMDCDAKIMFDVETFKQDVFVKCHSTPDSVEDVRRNCPKCPILLSPRDPHVVDSVEYVLNKHNEQLSGHVYEVLEISRGQHKYEPEAFYVEFAIVEVNCTAQEAHDDHHHCHPNTAGEDHIAFCKATVFRSHASLEKPKHENFESDCVILDVKEGHAHSHLIEHHIGKYSTSPGQNSTVECVAECPVAFVNKEVPTDISDRHTTPVKGCPGKILHFQL.

The N-terminal stretch at 1-19 is a signal peptide; the sequence is MHFLVALVLLGQIIGSTLS. Cystatin fetuin-A-type domains lie at 22-130 and 141-254; these read VRGD…VKCH and RNCP…SDCV. Residues 23 to 25 carry the Cell attachment site motif; that stretch reads RGD. Intrachain disulfides connect Cys28–Cys315, Cys85–Cys96, Cys110–Cys129, Cys143–Cys146, Cys205–Cys217, Cys230–Cys253, and Cys287–Cys291. N-linked (GlcNAc...) asparagine glycosylation occurs at Asn204. N-linked (GlcNAc...) asparagine glycosylation is present at Asn282.

As to quaternary structure, homodimer. In terms of tissue distribution, expressed by the liver.

Its subcellular location is the secreted. In terms of biological role, suppress hemorrhage induced by metalloproteinases from the same venom (brevilysin-H3, -H4, -H6) and from habu venom (weak inhibition of the metalloproteinases HR2A). The non-hemorrhagic brevilysin-H2 is strongly inhibited by jMSF, whereas the brevilysin-L6 is not inhibited. Does not inhibit serine and cysteine proteases such as trypsin, chymotrypsin, thermolysin, and papain. The inhibition may occur by formation of a non-covalent complex between this protein and the proteinases at their metalloproteinase domains. In Gloydius blomhoffii (Mamushi), this protein is Antihemorrhagic factor jMSF.